A 514-amino-acid polypeptide reads, in one-letter code: Multifunctional alkaline phosphatase superfamily protein pRL90232 (514 aa).

Positions 12, 57, 324, and 325 each coordinate Mn(2+). C57 acts as the Nucleophile in catalysis. The residue at position 57 (C57) is a 3-oxoalanine (Cys).

The protein belongs to the alkaline phosphatase superfamily. In terms of assembly, homotetramer. Mn(2+) serves as cofactor. The conversion to 3-oxoalanine (also known as C-formylglycine, FGly), of a serine or cysteine residue in prokaryotes and of a cysteine residue in eukaryotes, is critical for catalytic activity.

In terms of biological role, hydrolytic enzyme with a broad substrate specificity acting on phosphate diesters and phosphonate monoesters. The protein is Multifunctional alkaline phosphatase superfamily protein pRL90232 of Rhizobium johnstonii (strain DSM 114642 / LMG 32736 / 3841) (Rhizobium leguminosarum bv. viciae).